The chain runs to 118 residues: Large ribosomal subunit protein bL20 (118 aa).

This sequence belongs to the bacterial ribosomal protein bL20 family.

Binds directly to 23S ribosomal RNA and is necessary for the in vitro assembly process of the 50S ribosomal subunit. It is not involved in the protein synthesizing functions of that subunit. The chain is Large ribosomal subunit protein bL20 from Ralstonia nicotianae (strain ATCC BAA-1114 / GMI1000) (Ralstonia solanacearum).